Reading from the N-terminus, the 159-residue chain is Phosphopantetheine adenylyltransferase (159 aa).

Ser9 provides a ligand contact to substrate. ATP is bound by residues 9–10 and His17; that span reads SF. Residues Lys41, Ile73, and Lys87 each coordinate substrate. ATP-binding positions include 88–90, Glu98, and 122–128; these read GLR and WGYVSSS.

The protein belongs to the bacterial CoaD family. Homohexamer. Mg(2+) serves as cofactor.

The protein localises to the cytoplasm. The catalysed reaction is (R)-4'-phosphopantetheine + ATP + H(+) = 3'-dephospho-CoA + diphosphate. It participates in cofactor biosynthesis; coenzyme A biosynthesis; CoA from (R)-pantothenate: step 4/5. Functionally, reversibly transfers an adenylyl group from ATP to 4'-phosphopantetheine, yielding dephospho-CoA (dPCoA) and pyrophosphate. In Nocardioides sp. (strain ATCC BAA-499 / JS614), this protein is Phosphopantetheine adenylyltransferase.